Here is a 273-residue protein sequence, read N- to C-terminus: Flagellin FljO (273 aa).

It belongs to the bacterial flagellin family. In C.crescentus, the flagellar filament is composed of multiple flagellins of 29 kDa; 27 kDa and 25 kDa.

Its subcellular location is the secreted. It localises to the bacterial flagellum. In terms of biological role, flagellin is the subunit protein which polymerizes to form the filaments of bacterial flagella. In Caulobacter vibrioides (strain ATCC 19089 / CIP 103742 / CB 15) (Caulobacter crescentus), this protein is Flagellin FljO (fljO).